The following is a 254-amino-acid chain: Urease accessory protein UreF (254 aa).

Residues 1-11 (MDKGKSVKSTE) are compositionally biased toward basic and acidic residues. A disordered region spans residues 1 to 25 (MDKGKSVKSTEKSVGIPPKTPKTDN).

The protein belongs to the UreF family. As to quaternary structure, ureH, UreF and UreG form a complex that acts as a GTP-hydrolysis-dependent molecular chaperone, activating the urease apoprotein by helping to assemble the nickel containing metallocenter of UreC. The UreE protein probably delivers the nickel.

It localises to the cytoplasm. Its function is as follows. Required for maturation of urease via the functional incorporation of the urease nickel metallocenter. This chain is Urease accessory protein UreF, found in Helicobacter pylori (strain P12).